The primary structure comprises 358 residues: scyllo-inositol 2-dehydrogenase (NADP(+)) IolW (358 aa).

The protein belongs to the Gfo/Idh/MocA family.

The catalysed reaction is scyllo-inositol + NADP(+) = scyllo-inosose + NADPH + H(+). In terms of biological role, catalyzes the reversible NADPH-dependent reduction of scyllo-inosose (SIS) to scyllo-inositol (SI). Cannot use NADH instead of NADPH. May be involved in reduction of not only SIS but also various oxidized compounds manifested upon stressful conditions. This is scyllo-inositol 2-dehydrogenase (NADP(+)) IolW from Bacillus subtilis (strain 168).